A 242-amino-acid chain; its full sequence is Probable septum site-determining protein MinC (242 aa).

It belongs to the MinC family. In terms of assembly, interacts with MinD and FtsZ.

In terms of biological role, cell division inhibitor that blocks the formation of polar Z ring septums. Rapidly oscillates between the poles of the cell to destabilize FtsZ filaments that have formed before they mature into polar Z rings. Prevents FtsZ polymerization. This Agrobacterium fabrum (strain C58 / ATCC 33970) (Agrobacterium tumefaciens (strain C58)) protein is Probable septum site-determining protein MinC.